Here is a 513-residue protein sequence, read N- to C-terminus: Probable G-protein coupled receptor Mth-like 9 (513 aa).

The first 19 residues, 1–19, serve as a signal peptide directing secretion; sequence MVSPLIILLIIWLSVGAKS. Residues 20–207 are Extracellular-facing; that stretch reads VEIASINHPC…NCERFQTGYR (188 aa). Cystine bridges form between cysteine 29/cysteine 82, cysteine 84/cysteine 89, cysteine 93/cysteine 181, and cysteine 94/cysteine 107. A glycan (N-linked (GlcNAc...) asparagine) is linked at asparagine 36. 3 N-linked (GlcNAc...) asparagine glycosylation sites follow: asparagine 106, asparagine 125, and asparagine 165. Residues 208–228 traverse the membrane as a helical segment; the sequence is VWIYAICSIIAIIINIFILSL. At 229 to 242 the chain is on the cytoplasmic side; it reads LGSVRDARKSHYGQ. Residues 243 to 263 traverse the membrane as a helical segment; sequence LIIYYLLSMIVGYSLLVYLAL. Topologically, residues 264 to 276 are extracellular; that stretch reads KNPMKLSHVACRN. The chain crosses the membrane as a helical span at residues 277–297; it reads IGFLAYFCIMLSFVFLAICSL. The Cytoplasmic segment spans residues 298 to 314; that stretch reads DFLLKFKQKAVRSSVRR. A helical membrane pass occupies residues 315–335; that stretch reads LSLALAVLAVIGLRFLVSLAQ. Residues 336–360 are Extracellular-facing; that stretch reads DSKLPKHFKPGMGEDYCWFDVRTWG. The helical transmembrane segment at 361-381 threads the bilayer; that stretch reads ILIYYYGPIALLLIFSIVCCL. Residues 382–403 lie on the Cytoplasmic side of the membrane; the sequence is KAYFSIYELPPDTQYILGTQLK. Residues 404 to 424 form a helical membrane-spanning segment; that stretch reads IVKTHFYAFSAYIVGVFAVWI. Residues 425-438 lie on the Extracellular side of the membrane; it reads REIVVYIMARVREH. Residues 439 to 459 traverse the membrane as a helical segment; sequence FFIIDFWSGICILGLAIAGFI. At 460-513 the chain is on the cytoplasmic side; that stretch reads LLLGKNLHVKSWWAINVESSQTDLSIINARVYKFDEKGDLKSSDSPYKPTVTSL.

This sequence belongs to the G-protein coupled receptor 2 family. Mth subfamily.

The protein resides in the cell membrane. This chain is Probable G-protein coupled receptor Mth-like 9 (mthl9), found in Drosophila melanogaster (Fruit fly).